We begin with the raw amino-acid sequence, 522 residues long: Cytochrome P450 4e5, mitochondrial (522 aa).

Glu-307 and Cys-443 together coordinate heme.

This sequence belongs to the cytochrome P450 family. The cofactor is heme.

The protein resides in the mitochondrion. In terms of biological role, probably involved in steroid hormones biosynthesis. The sequence is that of Cytochrome P450 4e5, mitochondrial (Cyp4e5) from Drosophila mettleri (Fruit fly).